A 398-amino-acid polypeptide reads, in one-letter code: ATP-dependent RNA helicase RhlB (398 aa).

Residues 9–37 (TRFHDFKLSNELMHAIHDLGFPYCTPIQA) carry the Q motif motif. One can recognise a Helicase ATP-binding domain in the interval 40 to 220 (LGYTLRGQDA…KQWTTNPAIV (181 aa)). 53 to 60 (AQTGTGKT) is a binding site for ATP. A DEAD box motif is present at residues 166–169 (DEAD). In terms of domain architecture, Helicase C-terminal spans 243 to 393 (DKYKLLYNLV…MPPDELLKPV (151 aa)).

It belongs to the DEAD box helicase family. RhlB subfamily. Component of the RNA degradosome, which is a multiprotein complex involved in RNA processing and mRNA degradation.

It is found in the cytoplasm. It catalyses the reaction ATP + H2O = ADP + phosphate + H(+). Functionally, DEAD-box RNA helicase involved in RNA degradation. Has RNA-dependent ATPase activity and unwinds double-stranded RNA. The protein is ATP-dependent RNA helicase RhlB of Pseudomonas putida (strain ATCC 47054 / DSM 6125 / CFBP 8728 / NCIMB 11950 / KT2440).